Here is a 177-residue protein sequence, read N- to C-terminus: PRELI domain-containing protein 2 (177 aa).

Residues 1–175 (MGVTVDVHQV…LLKEQCGSPL (175 aa)) form the PRELI/MSF1 domain.

This is PRELI domain-containing protein 2 (Prelid2) from Mus musculus (Mouse).